Consider the following 465-residue polypeptide: Chromosomal replication initiator protein DnaA (465 aa).

The segment at 1-87 is domain I, interacts with DnaA modulators; that stretch reads MLWTDCLTRL…RPGSILSSSE (87 aa). A disordered region spans residues 81 to 123; it reads SILSSSEQPATTTAALQTAPIPQPAKVKREPEPVANTAVSSKS. Over residues 88–100 the composition is skewed to low complexity; sequence QPATTTAALQTAP. The tract at residues 88–127 is domain II; it reads QPATTTAALQTAPIPQPAKVKREPEPVANTAVSSKSSKKK. The segment at 128-345 is domain III, AAA+ region; the sequence is LLNPQFTFSL…GALNKVVAIS (218 aa). ATP contacts are provided by Gly-173, Gly-175, Lys-176, and Thr-177. Positions 346–465 are domain IV, binds dsDNA; the sequence is RFKGAPIDLD…YKNLLRLLQS (120 aa).

This sequence belongs to the DnaA family. In terms of assembly, oligomerizes as a right-handed, spiral filament on DNA at oriC.

The protein localises to the cytoplasm. Functionally, plays an essential role in the initiation and regulation of chromosomal replication. ATP-DnaA binds to the origin of replication (oriC) to initiate formation of the DNA replication initiation complex once per cell cycle. Binds the DnaA box (a 9 base pair repeat at the origin) and separates the double-stranded (ds)DNA. Forms a right-handed helical filament on oriC DNA; dsDNA binds to the exterior of the filament while single-stranded (ss)DNA is stabiized in the filament's interior. The ATP-DnaA-oriC complex binds and stabilizes one strand of the AT-rich DNA unwinding element (DUE), permitting loading of DNA polymerase. After initiation quickly degrades to an ADP-DnaA complex that is not apt for DNA replication. Binds acidic phospholipids. This is Chromosomal replication initiator protein DnaA from Acinetobacter baumannii (strain ATCC 17978 / DSM 105126 / CIP 53.77 / LMG 1025 / NCDC KC755 / 5377).